The sequence spans 463 residues: Probable Xaa-Pro aminopeptidase pepP (463 aa).

Residues aspartate 259, aspartate 270, glutamate 393, and glutamate 433 each coordinate Mn(2+).

Belongs to the peptidase M24B family. It depends on Mn(2+) as a cofactor.

The enzyme catalyses Release of any N-terminal amino acid, including proline, that is linked to proline, even from a dipeptide or tripeptide.. Its function is as follows. Catalyzes the removal of a penultimate prolyl residue from the N-termini of peptides. This is Probable Xaa-Pro aminopeptidase pepP (pepP) from Pyrenophora teres f. teres (strain 0-1) (Barley net blotch fungus).